Reading from the N-terminus, the 190-residue chain is Holliday junction branch migration complex subunit RuvA (190 aa).

The segment at 1–63 (MIRKINATIE…EWNTSLYIFK (63 aa)) is domain I. The interval 64–138 (DKIERDVFES…NSFSAYSTGA (75 aa)) is domain II. The tract at residues 138–142 (ADTQS) is flexible linker. Residues 143–190 (YGNNNLKEAIEALETLGFQRYEIMKVIGQLDLEDLKTEEIIKECLTRL) are domain III.

This sequence belongs to the RuvA family. As to quaternary structure, homotetramer. Forms an RuvA(8)-RuvB(12)-Holliday junction (HJ) complex. HJ DNA is sandwiched between 2 RuvA tetramers; dsDNA enters through RuvA and exits via RuvB. An RuvB hexamer assembles on each DNA strand where it exits the tetramer. Each RuvB hexamer is contacted by two RuvA subunits (via domain III) on 2 adjacent RuvB subunits; this complex drives branch migration. In the full resolvosome a probable DNA-RuvA(4)-RuvB(12)-RuvC(2) complex forms which resolves the HJ.

It localises to the cytoplasm. The RuvA-RuvB-RuvC complex processes Holliday junction (HJ) DNA during genetic recombination and DNA repair, while the RuvA-RuvB complex plays an important role in the rescue of blocked DNA replication forks via replication fork reversal (RFR). RuvA specifically binds to HJ cruciform DNA, conferring on it an open structure. The RuvB hexamer acts as an ATP-dependent pump, pulling dsDNA into and through the RuvAB complex. HJ branch migration allows RuvC to scan DNA until it finds its consensus sequence, where it cleaves and resolves the cruciform DNA. The chain is Holliday junction branch migration complex subunit RuvA from Petrotoga mobilis (strain DSM 10674 / SJ95).